Here is a 135-residue protein sequence, read N- to C-terminus: C-type lectin BpLec (135 aa).

Cystine bridges form between Cys3–Cys14, Cys31–Cys131, Cys38–Cys133, and Cys106–Cys123. Positions 10–132 (MNGLCYKIFD…CESKNAFLCQ (123 aa)) constitute a C-type lectin domain. Residues Gln96, Asp98, Glu104, Asn119, and Asp120 each contribute to the Ca(2+) site. The Galactose-binding signature appears at 96-98 (QPD).

The protein belongs to the true venom lectin family. Homodimer; disulfide-linked. Expressed by the venom gland.

Its subcellular location is the secreted. In terms of biological role, this lectin displays hemagglutinating activity on dog (128'000 HU/mg) and cat erythrocytes, that is inhibited by beta-galactosides (D-galactose, D-lactose, and N-acetyl-D-galactosamine) and EDTA. In addition, has been shown to hemagglutinate promastigote forms of Leishmania amazonensis. Also inhibits Gram-positive (S.aureus ATCC 25923) (MIC is 31.25 ug/ml) but not Gram-negative (E.coli ATCC 25922) bacteria. Is a calcium-dependent lectin. This is C-type lectin BpLec from Bothrops pauloensis (Neuwied's lancehead).